A 130-amino-acid chain; its full sequence is Small ribosomal subunit protein uS8 (130 aa).

The protein belongs to the universal ribosomal protein uS8 family. In terms of assembly, part of the 30S ribosomal subunit.

In terms of biological role, one of the primary rRNA binding proteins, it binds directly to 16S rRNA central domain where it helps coordinate assembly of the platform of the 30S subunit. The protein is Small ribosomal subunit protein uS8 of Methanobrevibacter smithii (strain ATCC 35061 / DSM 861 / OCM 144 / PS).